We begin with the raw amino-acid sequence, 377 residues long: Testis-expressed protein 13A (377 aa).

Positions 92-377 are required for repression of transcription; it reads WLQDLSSLHK…CGKGIWLQNP (286 aa). Positions 122–156 form a coiled coil; sequence QKEVALQLQMAQAKLEEVQRERDLLRLKILQAELR. An LRR repeat occupies 142 to 165; sequence ERDLLRLKILQAELRALPNAVRPA. The RanBP2-type zinc-finger motif lies at 345–369; that stretch reads RPGDWDCPWCKAVNFSRRENCFHCG. Cys-351, Cys-354, Cys-365, and Cys-368 together coordinate Zn(2+).

This sequence belongs to the TEX13 family. In terms of assembly, interacts with CNOT1; the interaction may inhibit CNOT1 binding to mRNA and subsequently CNOT1-mediated mRNA degradation.

In terms of biological role, binds to ssRNA containing the consensus sequence 5'-AGGUAA-3'. Plays a role in transcriptional repression. Required for rapid sperm motility and timely degradation of mRNA via its interaction with CNOT1. In Mus musculus (Mouse), this protein is Testis-expressed protein 13A.